The primary structure comprises 962 residues: MDEQALLGLNPNADSDFRQRALAYFEQLKISPDAWQVCAEALAQRTYSDDHVKFFCFQVLEHQVKYKYSELTTVQQQLIRETLISWLQAQMLNPQPEKTFIRNKAAQVFALLFVTEYLTKWPKFFFDILSVVDLNPRGVDLYLRILMAIDSELVDRDVVHTSEEARRNTLIKDTMREQCIPNLVESWYQILQNYQFTNSEVTCQCLEVVGAYVSWIDLSLIANDRFINMLLGHMSIEVLREEACDCLFEVVNKGMDPVDKMKLVESLCQVLQSAGFFSIDQEEDVDFLARFSKLVNGMGQSLIVSWSKLIKNGDIKNAQEALQAIETKVALMLQLLIHEDDDISSNIIGFCYDYLHILKQLTVLSDQQKANVEAIMLAVMKKLTYDEEYNFENEGEDEAMFVEYRKQLKLLLDRLAQVSPELLLASVRRVFSSTLQNWQTTRFMEVEVAIRLLYMLAEALPVSHGAHFSGDVSKASALQDMMRTLVTSGVSSYQHTSVTLEFFETVVRYEKFFTVEPQHIPCVLMAFLDHRGLRHSSAKVRSRTAYLFSRFVKSLNKQMNPFIEDILNRIQDLLELSPPENGHQSLLSSDDQLFIYETAGVLIVNSEYPAERKQALMRNLLTPLMEKFKILLEKLMLAQDEERQASLADCLNHAVGFASRTSKAFSNKQTVKQCGCSEVYLDCLQTFLPALSCPLQKDILRSGVRTFLHRMIICLEEEVLPFIPSASEHMLKDCEAKDLQEFIPLINQITAKFKIQVSPFLQQMFMPLLHAIFEVLLRPAEENDQSAALEKQMLRRSYFAFLQTVTGSGMSEVIANQGAENVERVLVTVIQGAVEYPDPIAQKTCFIILSKLVELWGGKDGPVGFADFVYKHIVPACFLAPLKQTFDLADAQTVLALSECAVTLKTIHLKRGPECVQYLQQEYLPSLQVAPEIIQEFCQALQQPDAKVFKNYLKVFFQRAKP.

Position 1 is an N-acetylmethionine (methionine 1). A necessary for interaction with Ran, nuclear localization and nuclear import region spans residues 1–385; sequence MDEQALLGLN…MLAVMKKLTY (385 aa). Residues 443–962 form a necessary for tRNA-binding, cytoplasmic localization and nuclear export region; sequence FMEVEVAIRL…LKVFFQRAKP (520 aa). Lysine 634 is subject to N6-acetyllysine.

This sequence belongs to the exportin family. Found in a complex with XPOT, Ran and tRNA. Probably found in a complex with nucleoporins. Interacts with Ran and tRNA in a GTP-dependent manner.

The protein resides in the nucleus. It is found in the cytoplasm. Functionally, mediates the nuclear export of aminoacylated tRNAs. In the nucleus binds to tRNA and to the GTPase Ran in its active GTP-bound form. Docking of this trimeric complex to the nuclear pore complex (NPC) is mediated through binding to nucleoporins. Upon transit of a nuclear export complex into the cytoplasm, disassembling of the complex and hydrolysis of Ran-GTP to Ran-GDP (induced by RANBP1 and RANGAP1, respectively) cause release of the tRNA from the export receptor. XPOT then return to the nuclear compartment and mediate another round of transport. The directionality of nuclear export is thought to be conferred by an asymmetric distribution of the GTP- and GDP-bound forms of Ran between the cytoplasm and nucleus. The sequence is that of Exportin-T (XPOT) from Homo sapiens (Human).